Here is a 167-residue protein sequence, read N- to C-terminus: Pathogenesis-related protein PRMS (167 aa).

Residues Met-1–Ser-27 form the signal peptide. In terms of domain architecture, SCP spans Pro-37–Tyr-155. 3 disulfide bridges follow: Cys-71/Cys-143, Cys-116/Cys-122, and Cys-138/Cys-153.

The protein belongs to the CRISP family.

Its function is as follows. Probably involved in the defense reaction of plants against pathogens. The polypeptide is Pathogenesis-related protein PRMS (PRMS) (Zea mays (Maize)).